We begin with the raw amino-acid sequence, 242 residues long: Probable transcriptional regulatory protein MHP7448_0474 (242 aa).

This sequence belongs to the TACO1 family.

It localises to the cytoplasm. This chain is Probable transcriptional regulatory protein MHP7448_0474, found in Mesomycoplasma hyopneumoniae (strain 7448) (Mycoplasma hyopneumoniae).